The following is a 299-amino-acid chain: Lathosterol oxidase (299 aa).

A run of 3 helical transmembrane segments spans residues 32–52, 79–99, and 117–137; these read ISLL…CATL, FTVQ…LLEI, and FELV…IYWI. Residues 124–252 enclose the Fatty acid hydroxylase domain; sequence ISFLFFTDMF…YFTLWDRIGG (129 aa). The Histidine box-1 motif lies at 138–143; it reads HRGLHH. The short motif at 151–155 is the Histidine box-2 element; it reads HKPHH. Residues 186 to 206 form a helical membrane-spanning segment; it reads IFPLHKVVYLSLYILVNIWTI. Positions 228–233 match the Histidine box-3 motif; sequence HHTDHH. S253 is modified (phosphoserine). Residues 274–299 are disordered; that stretch reads EGKRSSHSGNGCKNEKLFNGEFTKTE. Residues 286–299 are compositionally biased toward basic and acidic residues; sequence KNEKLFNGEFTKTE.

The protein belongs to the sterol desaturase family. It depends on Fe cation as a cofactor.

Its subcellular location is the endoplasmic reticulum membrane. The catalysed reaction is a Delta(7)-sterol + 2 Fe(II)-[cytochrome b5] + O2 + 2 H(+) = a Delta(5),Delta(7)-sterol + 2 Fe(III)-[cytochrome b5] + 2 H2O. The enzyme catalyses lathosterol + 2 Fe(II)-[cytochrome b5] + O2 + 2 H(+) = 7-dehydrocholesterol + 2 Fe(III)-[cytochrome b5] + 2 H2O. It catalyses the reaction 5alpha-cholesta-7,24-dien-3beta-ol + 2 Fe(II)-[cytochrome b5] + O2 + 2 H(+) = 7-dehydrodesmosterol + 2 Fe(III)-[cytochrome b5] + 2 H2O. The protein operates within steroid biosynthesis; cholesterol biosynthesis. Catalyzes the penultimate step of the biosynthesis of cholesterol, the dehydrogenation of lathosterol into 7-dehydrocholesterol (7-DHC). Cholesterol is the major sterol component in mammalian membranes and a precursor for bile acid and steroid hormone synthesis. In addition to its essential role in cholesterol biosynthesis, it also indirectly regulates ferroptosis through the production of 7-DHC. By diverting the spread of damage caused by peroxyl radicals from the phospholipid components to its sterol nucleus, 7-DHC prevents this form of cell death. In Homo sapiens (Human), this protein is Lathosterol oxidase.